A 530-amino-acid polypeptide reads, in one-letter code: Bifunctional purine biosynthesis protein PurH (530 aa).

The 148-residue stretch at 1–148 (MNNARPIRRA…KNHKDVTIVV (148 aa)) folds into the MGS-like domain.

This sequence belongs to the PurH family.

It carries out the reaction (6R)-10-formyltetrahydrofolate + 5-amino-1-(5-phospho-beta-D-ribosyl)imidazole-4-carboxamide = 5-formamido-1-(5-phospho-D-ribosyl)imidazole-4-carboxamide + (6S)-5,6,7,8-tetrahydrofolate. It catalyses the reaction IMP + H2O = 5-formamido-1-(5-phospho-D-ribosyl)imidazole-4-carboxamide. Its pathway is purine metabolism; IMP biosynthesis via de novo pathway; 5-formamido-1-(5-phospho-D-ribosyl)imidazole-4-carboxamide from 5-amino-1-(5-phospho-D-ribosyl)imidazole-4-carboxamide (10-formyl THF route): step 1/1. It functions in the pathway purine metabolism; IMP biosynthesis via de novo pathway; IMP from 5-formamido-1-(5-phospho-D-ribosyl)imidazole-4-carboxamide: step 1/1. The chain is Bifunctional purine biosynthesis protein PurH from Vibrio vulnificus (strain YJ016).